Reading from the N-terminus, the 807-residue chain is uncharacterized protein (807 aa).

The signal sequence occupies residues 1–18 (MNTVLFVILLAAIGSNHG). At 19–704 (LIDERLTVNR…GLFTDIFGGE (686 aa)) the chain is on the extracellular side. Polar residues predominate over residues 133–142 (TTTTAAPQTG). The tract at residues 133–171 (TTTTAAPQTGNRRRRRAAGDEPNTDDNTPPNLEIPDWLD) is disordered. Asparagine 277 and asparagine 660 each carry an N-linked (GlcNAc...) asparagine; by host glycan. The chain crosses the membrane as a helical span at residues 705-725 (VWAVIAAIFSPVFLTAFALII). At 726 to 807 (SLINFIPAVR…GERQVISRTN (82 aa)) the chain is on the cytoplasmic side.

The protein localises to the host membrane. This is an uncharacterized protein from Magallana gigas (Pacific oyster).